Reading from the N-terminus, the 88-residue chain is FXYD domain-containing ion transport regulator 3 (88 aa).

A signal peptide spans 1-17 (MHEVALSVLILLAGLSA). Residues 18-38 (LDANDPEDKNSPFYYDWHSLR) lie on the Extracellular side of the membrane. The helical transmembrane segment at 39 to 59 (VGGLICAGTPCALGIIILLSG) threads the bilayer. Residues 60–88 (KCKCKFSQKPSHRPGDAPPLITPGSAHDC) are Cytoplasmic-facing. A disordered region spans residues 66–88 (SQKPSHRPGDAPPLITPGSAHDC).

It belongs to the FXYD family. Regulatory subunit of the sodium/potassium-transporting ATPase which is composed of a catalytic alpha subunit, a non-catalytic beta subunit and an additional regulatory subunit. Interacts with catalytic alpha subunit ATP1A1. Also interacts with non-catalytic beta subunit ATP1B1. Interacts with the alpha1-beta1, alpha2-beta1 and alpha3-beta1 NKA isozymes. Post-translationally, glutathionylated.

The protein localises to the cell membrane. Associates with and regulates the activity of the sodium/potassium-transporting ATPase (NKA) which transports Na(+) out of the cell and K(+) into the cell. Reduces glutathionylation of the NKA beta-1 subunit ATP1B1, thus reversing glutathionylation-mediated inhibition of ATP1B1. Induces a hyperpolarization-activated chloride current when expressed in Xenopus oocytes. The sequence is that of FXYD domain-containing ion transport regulator 3 (FXYD3) from Sus scrofa (Pig).